The sequence spans 73 residues: UPF0352 protein APL_0584 (73 aa).

Belongs to the UPF0352 family.

This chain is UPF0352 protein APL_0584, found in Actinobacillus pleuropneumoniae serotype 5b (strain L20).